We begin with the raw amino-acid sequence, 353 residues long: Photosystem II protein D1 (353 aa).

Position 2 is an N-acetylthreonine (threonine 2). Residue threonine 2 is modified to Phosphothreonine. Transmembrane regions (helical) follow at residues 29–46 (YIGW…TATS), 118–133 (HFLL…EWEL), and 142–156 (WIAV…AAAA). Residue histidine 118 coordinates chlorophyll a. Tyrosine 126 contacts pheophytin a. 2 residues coordinate [CaMn4O5] cluster: aspartate 170 and glutamate 189. The helical transmembrane segment at 197–218 (FHMLGVAGVFGGSLFSAMHGSL) threads the bilayer. Residue histidine 198 coordinates chlorophyll a. Residues histidine 215 and 264–265 (SF) each bind a quinone. Position 215 (histidine 215) interacts with Fe cation. Histidine 272 lines the Fe cation pocket. A helical membrane pass occupies residues 274-288 (FLAAWPVVGIWFTAL). Residues histidine 332, glutamate 333, aspartate 342, and alanine 344 each contribute to the [CaMn4O5] cluster site. A propeptide spanning residues 345-353 (SVDAPSING) is cleaved from the precursor.

This sequence belongs to the reaction center PufL/M/PsbA/D family. PSII is composed of 1 copy each of membrane proteins PsbA, PsbB, PsbC, PsbD, PsbE, PsbF, PsbH, PsbI, PsbJ, PsbK, PsbL, PsbM, PsbT, PsbX, PsbY, PsbZ, Psb30/Ycf12, at least 3 peripheral proteins of the oxygen-evolving complex and a large number of cofactors. It forms dimeric complexes. The D1/D2 heterodimer binds P680, chlorophylls that are the primary electron donor of PSII, and subsequent electron acceptors. It shares a non-heme iron and each subunit binds pheophytin, quinone, additional chlorophylls, carotenoids and lipids. D1 provides most of the ligands for the Mn4-Ca-O5 cluster of the oxygen-evolving complex (OEC). There is also a Cl(-1) ion associated with D1 and D2, which is required for oxygen evolution. The PSII complex binds additional chlorophylls, carotenoids and specific lipids. serves as cofactor. Post-translationally, tyr-161 forms a radical intermediate that is referred to as redox-active TyrZ, YZ or Y-Z. C-terminally processed by CTPA; processing is essential to allow assembly of the oxygen-evolving complex and thus photosynthetic growth.

The protein resides in the plastid. It is found in the chloroplast thylakoid membrane. The enzyme catalyses 2 a plastoquinone + 4 hnu + 2 H2O = 2 a plastoquinol + O2. Functionally, photosystem II (PSII) is a light-driven water:plastoquinone oxidoreductase that uses light energy to abstract electrons from H(2)O, generating O(2) and a proton gradient subsequently used for ATP formation. It consists of a core antenna complex that captures photons, and an electron transfer chain that converts photonic excitation into a charge separation. The D1/D2 (PsbA/PsbD) reaction center heterodimer binds P680, the primary electron donor of PSII as well as several subsequent electron acceptors. The protein is Photosystem II protein D1 of Adiantum capillus-veneris (Maidenhair fern).